The sequence spans 300 residues: Bifunctional protein FolD (300 aa).

NADP(+)-binding positions include 169-171 (GRG), Ser-196, and Ile-237.

Belongs to the tetrahydrofolate dehydrogenase/cyclohydrolase family. As to quaternary structure, homodimer.

The enzyme catalyses (6R)-5,10-methylene-5,6,7,8-tetrahydrofolate + NADP(+) = (6R)-5,10-methenyltetrahydrofolate + NADPH. It carries out the reaction (6R)-5,10-methenyltetrahydrofolate + H2O = (6R)-10-formyltetrahydrofolate + H(+). The protein operates within one-carbon metabolism; tetrahydrofolate interconversion. Its function is as follows. Catalyzes the oxidation of 5,10-methylenetetrahydrofolate to 5,10-methenyltetrahydrofolate and then the hydrolysis of 5,10-methenyltetrahydrofolate to 10-formyltetrahydrofolate. This chain is Bifunctional protein FolD, found in Clavibacter michiganensis subsp. michiganensis (strain NCPPB 382).